A 125-amino-acid chain; its full sequence is Somatostatin-2 (125 aa).

Residues 1–24 form the signal peptide; the sequence is MQCIRCPAILALLALVLCGPSVSS. Gln25 carries the pyrrolidone carboxylic acid modification. A propeptide spanning residues 25 to 97 is cleaved from the precursor; it reads QLDREQSDNQ…ATGGRMNLER (73 aa). The segment at 82–107 is disordered; sequence AEDASMATGGRMNLERSVDSTNNLPP. Cys114 and Cys125 are disulfide-bonded. Residue Lys120 is modified to 5-hydroxylysine.

It belongs to the somatostatin family.

The protein resides in the secreted. In terms of biological role, somatostatin inhibits the release of somatotropin. The chain is Somatostatin-2 (sst2) from Lophius americanus (American angler).